Reading from the N-terminus, the 646-residue chain is MALSVQDCARLTGQSVPAMERFSPLRNIWNRVREYARAATTAAGITWLSRYVYHYHRLMLEDLAPGTPATLRWPLYREPPPHFLVGYQYLVRTCNDYVFESRAYSRLRYTEITQPGMQVVNWSVMANCTYTINTGSYHRFVDLDDFQNTLTQIQQAVLAERVVADLALLQPLRGFGSTRMADRGELEIPVESLMQDYYKDLRRCQNEAWGMADRLRIQQAGPKDVTLLATIRRLKTAYFNFLISSITSSAASLRIPHATVLSLPCDCDWLEAFLEKFSDPVQLDSLNEAWQSLPMQQMIRCTVSALSLPQGPHLLPPLSGSGMQGGVFELRPRENGRAVTETMRRRRGEMIQRFIDRLPVRRRRRRQPVPAPVSPEGPAVEEEEFMEIEETPAAFEQEVRETVAEAIRLLQEELTFAARNSQFFNFAVDFYEAMDRLEALGDINEMTLRRWVMYFFVCEHIATTLNYLFQRLRNYAVFARHVELNIAQVVMRARNTVGDVVYSRVWNENGLNAFSQLMRRISNDLAATVERAGHGELQDEEIDQFMSEIAYQDNSGDVQEILRQAAVNDADIDSVELSFRFRVRGPVVFSQRRHIQDLNRRVVAYASQLRAQHQPLPELHADVPLPPLQANPHPPLPPDARPQRTM.

Residues 357 to 366 carry the Nuclear localization signal motif; that stretch reads RLPVRRRRRR. S555 is subject to O-(5'-phospho-DNA)-serine. The interval 619-646 is disordered; that stretch reads LHADVPLPPLQANPHPPLPPDARPQRTM. A compositionally biased stretch (pro residues) spans 624-640; sequence PLPPLQANPHPPLPPDA.

This sequence belongs to the adenoviridae terminal protein family. In terms of assembly, heterodimer with the polymerase; this heterodimer binds to bp 9 to 18 of the genome. Interacts with host POU2F1; POU2F1 binds to the auxiliary sequences in the inverted terminal repeats and tethers the pTP-POL heterodimer to the origin DNA thereby participating in the assembly of the pre-initiation complex (POL-TP-DBP-NFIA-POU2F1). Post-translationally, preterminal protein is used to replicate viral genome, upon genomic encapsidation it is processed first into iTP and finally into TP by adenovirus protease.

It localises to the host nucleus matrix. Functionally, protein covalently bound to the viral DNA that acts as a primer for viral genomic replication by DNA strand displacement. Assembles on the viral origin of replication in an initiation complex with viral polymerase, DBP, host NFIA and host POU2F1/OCT1. During initiation, the polymerase covalently couples the first dCTP with Ser-580 of pTP. The terminal protein stimulates the template activity over 20 fold compared to protein-free templates. Neo-synthesized viral genomes are linked to two preterminal proteins, one for each 5' end. These new genomes are encapsidated in the nucleus, and during capsid maturation by viral protease, preterminal protein is first cleaved into intermediary (iTP), then into mature TP. May play a role in host nuclear matrix localization of genomic DNA. The chain is Preterminal protein from Homo sapiens (Human).